The primary structure comprises 148 residues: Large ribosomal subunit protein uL15 (148 aa).

Residues 1–30 (MPSRLRKTRKLRGHVSHGHGRIGKHRKHPG) show a composition bias toward basic residues. Residues 1–39 (MPSRLRKTRKLRGHVSHGHGRIGKHRKHPGGRGNAGGLH) form a disordered region. Residue His-39 is modified to (3S)-3-hydroxyhistidine. An N6-acetyllysine mark is found at Lys-47 and Lys-55. Ser-68 carries the post-translational modification Phosphoserine. Position 110 is an N6-acetyllysine (Lys-110).

This sequence belongs to the universal ribosomal protein uL15 family. In terms of assembly, component of the large ribosomal subunit. In terms of processing, hydroxylated on His-39 by MINA.

The protein localises to the cytoplasm. Functionally, component of the large ribosomal subunit. The ribosome is a large ribonucleoprotein complex responsible for the synthesis of proteins in the cell. The polypeptide is Large ribosomal subunit protein uL15 (RPL27A) (Macaca fascicularis (Crab-eating macaque)).